Here is a 360-residue protein sequence, read N- to C-terminus: UDP-N-acetylglucosamine--N-acetylmuramyl-(pentapeptide) pyrophosphoryl-undecaprenol N-acetylglucosamine transferase (360 aa).

Residues 13–15 (TGG), R164, S192, and Q293 each bind UDP-N-acetyl-alpha-D-glucosamine.

This sequence belongs to the glycosyltransferase 28 family. MurG subfamily.

Its subcellular location is the cell inner membrane. The catalysed reaction is di-trans,octa-cis-undecaprenyl diphospho-N-acetyl-alpha-D-muramoyl-L-alanyl-D-glutamyl-meso-2,6-diaminopimeloyl-D-alanyl-D-alanine + UDP-N-acetyl-alpha-D-glucosamine = di-trans,octa-cis-undecaprenyl diphospho-[N-acetyl-alpha-D-glucosaminyl-(1-&gt;4)]-N-acetyl-alpha-D-muramoyl-L-alanyl-D-glutamyl-meso-2,6-diaminopimeloyl-D-alanyl-D-alanine + UDP + H(+). It participates in cell wall biogenesis; peptidoglycan biosynthesis. Functionally, cell wall formation. Catalyzes the transfer of a GlcNAc subunit on undecaprenyl-pyrophosphoryl-MurNAc-pentapeptide (lipid intermediate I) to form undecaprenyl-pyrophosphoryl-MurNAc-(pentapeptide)GlcNAc (lipid intermediate II). In Chromobacterium violaceum (strain ATCC 12472 / DSM 30191 / JCM 1249 / CCUG 213 / NBRC 12614 / NCIMB 9131 / NCTC 9757 / MK), this protein is UDP-N-acetylglucosamine--N-acetylmuramyl-(pentapeptide) pyrophosphoryl-undecaprenol N-acetylglucosamine transferase.